Consider the following 543-residue polypeptide: Chaperonin GroEL 7 (543 aa).

ATP-binding positions include T30–P33, K51, D87–T91, G415, and D496.

This sequence belongs to the chaperonin (HSP60) family. Forms a cylinder of 14 subunits composed of two heptameric rings stacked back-to-back. Interacts with the co-chaperonin GroES.

It localises to the cytoplasm. It carries out the reaction ATP + H2O + a folded polypeptide = ADP + phosphate + an unfolded polypeptide.. Together with its co-chaperonin GroES, plays an essential role in assisting protein folding. The GroEL-GroES system forms a nano-cage that allows encapsulation of the non-native substrate proteins and provides a physical environment optimized to promote and accelerate protein folding. This chain is Chaperonin GroEL 7, found in Bradyrhizobium diazoefficiens (strain JCM 10833 / BCRC 13528 / IAM 13628 / NBRC 14792 / USDA 110).